A 135-amino-acid chain; its full sequence is Sex-regulated protein janus-A (135 aa).

Lys-37 provides a ligand contact to substrate. The active-site Proton acceptor is the His-63. A substrate-binding site is contributed by 104 to 106; sequence SQG.

The protein belongs to the janus family. Somatic and germline cells. Isoform B is expressed in both sexes and in somatic and germ line cells. Isoform A is expressed in males and is germ line specific.

JanA and janB regulate somatic sex differentiation. The protein is Sex-regulated protein janus-A (janA) of Drosophila melanogaster (Fruit fly).